We begin with the raw amino-acid sequence, 430 residues long: Ribosomal protein uS12 methylthiotransferase RimO (430 aa).

The region spanning 4-119 (LKINFISLGC…IPVLFDIKPK (116 aa)) is the MTTase N-terminal domain. Residues C13, C49, C82, C141, C145, and C148 each contribute to the [4Fe-4S] cluster site. In terms of domain architecture, Radical SAM core spans 127-358 (STPKHTAYLK…SALQENITEQ (232 aa)). In terms of domain architecture, TRAM spans 361–430 (KSLIGKELDI…DKYDVVGEAE (70 aa)).

The protein belongs to the methylthiotransferase family. RimO subfamily. Requires [4Fe-4S] cluster as cofactor.

The protein resides in the cytoplasm. It carries out the reaction L-aspartate(89)-[ribosomal protein uS12]-hydrogen + (sulfur carrier)-SH + AH2 + 2 S-adenosyl-L-methionine = 3-methylsulfanyl-L-aspartate(89)-[ribosomal protein uS12]-hydrogen + (sulfur carrier)-H + 5'-deoxyadenosine + L-methionine + A + S-adenosyl-L-homocysteine + 2 H(+). Its function is as follows. Catalyzes the methylthiolation of an aspartic acid residue of ribosomal protein uS12. This is Ribosomal protein uS12 methylthiotransferase RimO from Sulfurihydrogenibium sp. (strain YO3AOP1).